The chain runs to 454 residues: uncharacterized protein (454 aa).

The HNH domain occupies 364–405 (CSRPGCDAPAYHSEVHHVTPWTTTHRTDINDLTLACGPDNRL).

It belongs to the Rv1128c/1148c/1588c/1702c/1945/3466 family.

This is an uncharacterized protein from Mycobacterium tuberculosis (strain CDC 1551 / Oshkosh).